A 281-amino-acid chain; its full sequence is Bis(5'-nucleosyl)-tetraphosphatase, symmetrical (281 aa).

This sequence belongs to the Ap4A hydrolase family.

It catalyses the reaction P(1),P(4)-bis(5'-adenosyl) tetraphosphate + H2O = 2 ADP + 2 H(+). In terms of biological role, hydrolyzes diadenosine 5',5'''-P1,P4-tetraphosphate to yield ADP. The protein is Bis(5'-nucleosyl)-tetraphosphatase, symmetrical of Acidovorax sp. (strain JS42).